The chain runs to 403 residues: Phosphopentomutase (403 aa).

Residues aspartate 13, aspartate 298, histidine 303, aspartate 339, histidine 340, and histidine 351 each contribute to the Mn(2+) site.

This sequence belongs to the phosphopentomutase family. Mn(2+) is required as a cofactor.

The protein resides in the cytoplasm. It catalyses the reaction 2-deoxy-alpha-D-ribose 1-phosphate = 2-deoxy-D-ribose 5-phosphate. The catalysed reaction is alpha-D-ribose 1-phosphate = D-ribose 5-phosphate. Its pathway is carbohydrate degradation; 2-deoxy-D-ribose 1-phosphate degradation; D-glyceraldehyde 3-phosphate and acetaldehyde from 2-deoxy-alpha-D-ribose 1-phosphate: step 1/2. In terms of biological role, isomerase that catalyzes the conversion of deoxy-ribose 1-phosphate (dRib-1-P) and ribose 1-phosphate (Rib-1-P) to deoxy-ribose 5-phosphate (dRib-5-P) and ribose 5-phosphate (Rib-5-P), respectively. The chain is Phosphopentomutase from Streptococcus thermophilus (strain CNRZ 1066).